Reading from the N-terminus, the 733-residue chain is DNA repair and recombination protein RAD54-like (733 aa).

Positions 1–35 (LAKRKAGGEEEDGEWRPPATQKRQKAGSEAESADC) are disordered. The Helicase ATP-binding domain occupies 159–334 (SRRIPGSHGC…FSLVHFVNSG (176 aa)). 172–179 (DEMGLGKT) contributes to the ATP binding site. The short motif at 285 to 288 (DEGH) is the DEGH box element. The region spanning 488–642 (LVLDYILAVT…CVVDEEQDVE (155 aa)) is the Helicase C-terminal domain. Residue Lys504 is modified to N6-acetyllysine. Ser561 is subject to Phosphoserine; by NEK1.

The protein belongs to the SNF2/RAD54 helicase family. In terms of assembly, homohexamer. Interacts (via N-terminus) with RAD51. Interacts with NAP1L1. Interacts with BRD9; this interaction orchestrates RAD51-RAD54 complex formation. In terms of processing, acetylated. Acetylation promotes interaction with BRD9, and subsequently with RAD54, which is essential for homologous recombination (HR). Post-translationally, phosphorylated. Phosphorylation at Ser-561 by NEK1 specifically in G2 phase allows efficient removal of RAD51 filaments from DNA. Highly expressed in bursa, thymus, testis, and ovary. Low level of expression seen in all other organs tested.

It is found in the nucleus. In terms of biological role, plays an essential role in homologous recombination (HR) which is a major pathway for repairing DNA double-strand breaks (DSBs), single-stranded DNA (ssDNA) gaps, and stalled or collapsed replication forks. Acts as a molecular motor during the homology search and guides RAD51 ssDNA along a donor dsDNA thereby changing the homology search from the diffusion-based mechanism to a motor-guided mechanism. Plays also an essential role in RAD51-mediated synaptic complex formation which consists of three strands encased in a protein filament formed once homology is recognized. Once DNA strand exchange occured, dissociates RAD51 from nucleoprotein filaments formed on dsDNA. This is DNA repair and recombination protein RAD54-like (RAD54L) from Gallus gallus (Chicken).